A 305-amino-acid chain; its full sequence is Ornithine carbamoyltransferase (305 aa).

Residues 50-53 (STRT), glutamine 77, arginine 101, and 128-131 (HPCQ) each bind carbamoyl phosphate. L-ornithine is bound by residues asparagine 162, aspartate 220, and 224-225 (SM). Carbamoyl phosphate contacts are provided by residues 260–261 (CL) and arginine 288.

This sequence belongs to the aspartate/ornithine carbamoyltransferase superfamily. OTCase family.

The protein resides in the cytoplasm. The catalysed reaction is carbamoyl phosphate + L-ornithine = L-citrulline + phosphate + H(+). It functions in the pathway amino-acid degradation; L-arginine degradation via ADI pathway; carbamoyl phosphate from L-arginine: step 2/2. Reversibly catalyzes the transfer of the carbamoyl group from carbamoyl phosphate (CP) to the N(epsilon) atom of ornithine (ORN) to produce L-citrulline. This is Ornithine carbamoyltransferase from Akkermansia muciniphila (strain ATCC BAA-835 / DSM 22959 / JCM 33894 / BCRC 81048 / CCUG 64013 / CIP 107961 / Muc).